The following is a 317-amino-acid chain: Proline-rich protein 2 (317 aa).

An N-terminal signal peptide occupies residues 1-16; that stretch reads MLVVLFTVALLALSSA. The segment at 15–317 is disordered; that stretch reads SAQGPREELQ…PPQGRPQGPQ (303 aa). A compositionally biased stretch (pro residues) spans 32-44; the sequence is QRPPPSGSQPRPP. N-linked (GlcNAc...) asparagine glycosylation is present at N46. 2 stretches are compositionally biased toward pro residues: residues 51 to 183 and 204 to 288; these read GPPP…PPAG and QSPP…PTQG. The span at 289 to 305 shows a compositional bias: low complexity; sequence PHPTGGPQQTPPLAGNP. A compositionally biased stretch (pro residues) spans 306-317; the sequence is QGPPQGRPQGPQ.

The protein localises to the secreted. The chain is Proline-rich protein 2 (Prp2) from Mus musculus (Mouse).